The sequence spans 245 residues: Ribonuclease PH (245 aa).

Phosphate-binding positions include Arg-93 and 131–133 (GTR).

Belongs to the RNase PH family. In terms of assembly, homohexameric ring arranged as a trimer of dimers.

It carries out the reaction tRNA(n+1) + phosphate = tRNA(n) + a ribonucleoside 5'-diphosphate. In terms of biological role, phosphorolytic 3'-5' exoribonuclease that plays an important role in tRNA 3'-end maturation. Removes nucleotide residues following the 3'-CCA terminus of tRNAs; can also add nucleotides to the ends of RNA molecules by using nucleoside diphosphates as substrates, but this may not be physiologically important. Probably plays a role in initiation of 16S rRNA degradation (leading to ribosome degradation) during starvation. The sequence is that of Ribonuclease PH from Corynebacterium glutamicum (strain R).